The primary structure comprises 746 residues: Quiannulatene synthase (746 aa).

The sesterterpenoid synthase stretch occupies residues 1-336 (MASEVIVISD…SRYPTKTELN (336 aa)). A Mg(2+)-binding site is contributed by Asp-95. The segment at 338 to 746 (PEVIIVDGEL…VELMLRRLWV (409 aa)) is geranylfarnesyl diphosphate synthase. Isopentenyl diphosphate-binding residues include Lys-465, Arg-468, and His-497. Asp-504 and Asp-508 together coordinate Mg(2+). Arg-513 serves as a coordination point for dimethylallyl diphosphate. Arg-514 lines the isopentenyl diphosphate pocket. Residues Lys-591, Thr-592, Gln-628, Asn-635, and Lys-645 each contribute to the dimethylallyl diphosphate site.

It in the N-terminal section; belongs to the terpene synthase family. In the C-terminal section; belongs to the FPP/GGPP synthase family. Requires Mg(2+) as cofactor.

It catalyses the reaction isopentenyl diphosphate + (2E,6E)-farnesyl diphosphate = (2E,6E,10E)-geranylgeranyl diphosphate + diphosphate. It carries out the reaction (2E,6E,10E,14E)-geranylfarnesyl diphosphate = quiannulatene + diphosphate. It participates in secondary metabolite biosynthesis; terpenoid biosynthesis. In terms of biological role, bifunctional sesterterpene synthase; part of the gene cluster that mediates the biosynthesis of the pentacyclic sesterterpene quiannulatic acid. The first step of the pathway is performed by the sesterterpene synthase (QS) that possesses both prenyl transferase and terpene cyclase activity, converting isopentenyl diphosphate and dimethylallyl diphosphate into geranylfarnesyl diphosphate (GFPP) and further converting GFPP into quiannulatene via an unprecedented cyclization mode which involves three rounds of hydride shifts and two successive C-C bond migrations to construct the 5-6-5-5-5 fused ring. The cytochrome P450 monooxygenase Qnn-P450 then oxidizes quiannulatene at C-19 in 3 successive reactions to afford quiannulatic acid. The protein is Quiannulatene synthase of Emericella variicolor (Aspergillus stellatus).